Consider the following 1415-residue polypeptide: Major viral transcription factor ICP4 homolog (1415 aa).

Disordered regions lie at residues 48–272 (MDDD…SSSG), 454–480 (DNSS…TSTQ), 691–935 (LLND…PSCY), and 1371–1415 (QHEE…TFTD). The segment covering 96 to 105 (PRLTTPSSGR) has biased composition (polar residues). The span at 125–187 (PETSPSNEHI…LSSPSSSRSP (63 aa)) shows a compositional bias: low complexity. Positions 245–255 (GGGRPRGRPPK) are enriched in basic residues. 2 stretches are compositionally biased toward polar residues: residues 263–272 (NDIQVTSSSG) and 465–480 (SKPS…TSTQ). Residues 724–738 (STSSSQSASDKSPIK) are compositionally biased toward low complexity. 2 stretches are compositionally biased toward polar residues: residues 814–837 (KAQT…QSSS) and 895–910 (VGQT…HDIL). The segment covering 911–933 (SSSLPNRSCSSSPSPSKRPYHPS) has biased composition (low complexity).

It belongs to the herpesviridae ICP4 family. Post-translationally, a long stretch of serine residues may be a major site of phosphorylation.

Its subcellular location is the host nucleus. This IE protein is a multifunctional protein capable of migrating to the nucleus, binding to DNA, trans-activating other viral genes, and autoregulating its own synthesis. It is required for the switch from immediate-early to early mode of gene expression. In Gallus gallus (Chicken), this protein is Major viral transcription factor ICP4 homolog (ICP4).